A 106-amino-acid chain; its full sequence is Evasin P1168 (106 aa).

The N-terminal stretch at 1 to 24 (MEVKISTFLQIAVLIVLGIHLIAA) is a signal peptide. 3 disulfide bridges follow: Cys-45-Cys-67, Cys-49-Cys-69, and Cys-60-Cys-80. N-linked (GlcNAc...) asparagine glycans are attached at residues Asn-48, Asn-54, and Asn-64.

The protein resides in the secreted. In terms of biological role, salivary chemokine-binding protein which binds to host chemokines CXCL1, CXCL2 and CXCL8. This Ixodes ricinus (Common tick) protein is Evasin P1168.